The sequence spans 292 residues: Ribosomal RNA small subunit methyltransferase I (292 aa).

It belongs to the methyltransferase superfamily. RsmI family.

The protein resides in the cytoplasm. It catalyses the reaction cytidine(1402) in 16S rRNA + S-adenosyl-L-methionine = 2'-O-methylcytidine(1402) in 16S rRNA + S-adenosyl-L-homocysteine + H(+). Its function is as follows. Catalyzes the 2'-O-methylation of the ribose of cytidine 1402 (C1402) in 16S rRNA. This chain is Ribosomal RNA small subunit methyltransferase I, found in Buchnera aphidicola subsp. Baizongia pistaciae (strain Bp).